The sequence spans 48 residues: Cytochrome b559 subunit beta (48 aa).

A helical transmembrane segment spans residues 23–39; the sequence is WLAVHALAIPSVFFLGS. A heme-binding site is contributed by His-27.

The protein belongs to the PsbE/PsbF family. As to quaternary structure, heterodimer of an alpha subunit and a beta subunit. PSII is composed of 1 copy each of membrane proteins PsbA, PsbB, PsbC, PsbD, PsbE, PsbF, PsbH, PsbI, PsbJ, PsbK, PsbL, PsbM, PsbT, PsbX, PsbY, Psb30/Ycf12, peripheral proteins PsbO, CyanoQ (PsbQ), PsbU, PsbV and a large number of cofactors. It forms dimeric complexes. Heme b is required as a cofactor.

It is found in the cellular thylakoid membrane. Functionally, this b-type cytochrome is tightly associated with the reaction center of photosystem II (PSII). PSII is a light-driven water:plastoquinone oxidoreductase that uses light energy to abstract electrons from H(2)O, generating O(2) and a proton gradient subsequently used for ATP formation. It consists of a core antenna complex that captures photons, and an electron transfer chain that converts photonic excitation into a charge separation. This is Cytochrome b559 subunit beta from Prochlorococcus marinus (strain MIT 9301).